A 546-amino-acid polypeptide reads, in one-letter code: Chaperonin GroEL (546 aa).

ATP contacts are provided by residues 30–33 (TLGP), Lys51, 87–91 (DGTTT), Gly415, and Asp497. The disordered stretch occupies residues 527–546 (PKKDSPAPAMPGGGMGGMDF). Residues 537-546 (PGGGMGGMDF) show a composition bias toward gly residues.

This sequence belongs to the chaperonin (HSP60) family. In terms of assembly, forms a cylinder of 14 subunits composed of two heptameric rings stacked back-to-back. Interacts with the co-chaperonin GroES.

It localises to the cytoplasm. The catalysed reaction is ATP + H2O + a folded polypeptide = ADP + phosphate + an unfolded polypeptide.. Its function is as follows. Together with its co-chaperonin GroES, plays an essential role in assisting protein folding. The GroEL-GroES system forms a nano-cage that allows encapsulation of the non-native substrate proteins and provides a physical environment optimized to promote and accelerate protein folding. In Methylobacterium radiotolerans (strain ATCC 27329 / DSM 1819 / JCM 2831 / NBRC 15690 / NCIMB 10815 / 0-1), this protein is Chaperonin GroEL.